The following is a 466-amino-acid chain: FAD-dependent monooxygenase dpfgE (466 aa).

An N-terminal signal peptide occupies residues 1–23 (MSQKPFRVIIVGGSVTGLTLAHS). Residues Glu35, Gly49, and Arg108 each contribute to the FAD site. Asn128 and Asn192 each carry an N-linked (GlcNAc...) asparagine glycan. FAD-binding residues include Asp312 and Ala325. Residue Asn376 is glycosylated (N-linked (GlcNAc...) asparagine). Residues 443-465 (GVVRNVFFLLAATVIVAWVCRLW) traverse the membrane as a helical segment.

The protein belongs to the paxM FAD-dependent monooxygenase family. Requires FAD as cofactor.

Its subcellular location is the membrane. Its pathway is secondary metabolite biosynthesis; terpenoid biosynthesis. FAD-dependent monooxygenase; part of the gene cluster that mediates the biosynthesis of diterpenoid pyrones. The first step of the pathway is the synthesis of the alpha-pyrone moiety by the polyketide synthase dpfgA via condensation of one acetyl-CoA starter unit with 3 malonyl-CoA units and 2 methylations. The alpha-pyrone is then combined with geranylgeranyl pyrophosphate (GGPP) formed by the GGPP synthase dpfgD through the action of the prenyltransferase dpfgC to yield a linear alpha-pyrone diterpenoid. Subsequent steps in the diterpenoid pyrone biosynthetic pathway involve the decalin core formation, which is initiated by the epoxidation of the C10-C11 olefin by the FAD-dependent oxidoreductase dpfgE, and is followed by a cyclization cascade catalyzed by the terpene cyclase dpfgB. The short chain dehydrogenase/reductase dpfgG then oxidizes the 8S hydroxy group to a ketone and the short chain dehydrogenase/reductase dpfgH reduces the ketone to the 8R hydroxy group to yield higginsianin B. Higginsianin B is further methylated by the methyltransferase dpfgI to produce the intermediate named FDDP B. The cytochrome P450 monooxygenase dfgpJ then catalyzes a three-step oxidation at C-27 to generate a carboxylic acid as well as C-26 hydroxylation. Finally, methyltransferase dpfgK methylates the carboxylic acid generated by dpfgJ, yielding the final diterpenoid pyrones from the pathway which were named FDDP D and FDDP E. This Gibberella zeae (strain ATCC MYA-4620 / CBS 123657 / FGSC 9075 / NRRL 31084 / PH-1) (Wheat head blight fungus) protein is FAD-dependent monooxygenase dpfgE.